Here is a 530-residue protein sequence, read N- to C-terminus: Autoinducer-2 kinase (530 aa).

It belongs to the FGGY kinase family.

The protein resides in the cytoplasm. It catalyses the reaction (S)-4,5-dihydroxypentane-2,3-dione + ATP = (2S)-2-hydroxy-3,4-dioxopentyl phosphate + ADP + H(+). Functionally, catalyzes the phosphorylation of autoinducer-2 (AI-2) to phospho-AI-2, which subsequently inactivates the transcriptional regulator LsrR and leads to the transcription of the lsr operon. Phosphorylates the ring-open form of (S)-4,5-dihydroxypentane-2,3-dione (DPD), which is the precursor to all AI-2 signaling molecules, at the C5 position. The sequence is that of Autoinducer-2 kinase from Escherichia coli (strain SMS-3-5 / SECEC).